A 318-amino-acid chain; its full sequence is Inactive dihydropteroate synthase 2 (318 aa).

The segment at Met-1–Ala-25 is disordered. The Pterin-binding domain maps to Ala-42–Glu-299.

Belongs to the DHPS family. Homodimer.

Has very low affinity for the DHPS substrate 6-hydroxymethyl-7,8-dihydropterin-pyrophosphate, but can bind the inhibitor dapsone. Seems to lack dihydropteroate synthase activity, and does probably not function in folate metabolism. The protein is Inactive dihydropteroate synthase 2 (folP2) of Mycobacterium bovis (strain ATCC BAA-935 / AF2122/97).